Consider the following 131-residue polypeptide: Small ribosomal subunit protein bS6 (131 aa).

A disordered region spans residues 99-131 (ASPMVKAKDERRERREDFATETNEDSDAGDSEE). Basic and acidic residues predominate over residues 104 to 116 (KAKDERRERREDF). Acidic residues predominate over residues 120 to 131 (TNEDSDAGDSEE).

The protein belongs to the bacterial ribosomal protein bS6 family.

Its function is as follows. Binds together with bS18 to 16S ribosomal RNA. The protein is Small ribosomal subunit protein bS6 of Sodalis glossinidius (strain morsitans).